Here is a 105-residue protein sequence, read N- to C-terminus: Large ribosomal subunit protein bL21 (105 aa).

This sequence belongs to the bacterial ribosomal protein bL21 family. Part of the 50S ribosomal subunit. Contacts protein L20.

This protein binds to 23S rRNA in the presence of protein L20. The protein is Large ribosomal subunit protein bL21 of Parafrankia sp. (strain EAN1pec).